The primary structure comprises 315 residues: B3 domain-containing protein At1g05920 (315 aa).

The interval 24–129 (MISRDNQKKT…PQVASVPKSV (106 aa)) is disordered. Composition is skewed to basic and acidic residues over residues 39 to 51 (VREE…EEMI), 66 to 83 (KEGK…DNRT), and 100 to 114 (FDHV…HAYL). Positions 204 to 306 (INTVIQNDFL…ILCFALVPPT (103 aa)) form a DNA-binding region, TF-B3.

The protein resides in the nucleus. The sequence is that of B3 domain-containing protein At1g05920 from Arabidopsis thaliana (Mouse-ear cress).